The chain runs to 259 residues: Phosphate import ATP-binding protein PstB (259 aa).

An ABC transporter domain is found at 6–254 (SKNESVVFDV…PKDKRTEDYI (249 aa)). 45–52 (GPSGCGKS) lines the ATP pocket.

This sequence belongs to the ABC transporter superfamily. Phosphate importer (TC 3.A.1.7) family. The complex is composed of two ATP-binding proteins (PstB), two transmembrane proteins (PstC and PstA) and a solute-binding protein (PstS).

The protein localises to the cell membrane. The enzyme catalyses phosphate(out) + ATP + H2O = ADP + 2 phosphate(in) + H(+). Part of the ABC transporter complex PstSACB involved in phosphate import. Responsible for energy coupling to the transport system. The sequence is that of Phosphate import ATP-binding protein PstB from Desulfitobacterium hafniense (strain Y51).